A 268-amino-acid chain; its full sequence is Shikimate dehydrogenase (NADP(+)) (268 aa).

Thr-62 lines the shikimate pocket. Catalysis depends on Lys-66, which acts as the Proton acceptor. An NADP(+)-binding site is contributed by Glu-78. Shikimate-binding residues include Asn-87 and Asp-102. NADP(+) contacts are provided by residues 126–130 (GSGGI) and Leu-207. Tyr-209 contributes to the shikimate binding site. Residue Gly-230 participates in NADP(+) binding.

Belongs to the shikimate dehydrogenase family. In terms of assembly, homodimer.

It carries out the reaction shikimate + NADP(+) = 3-dehydroshikimate + NADPH + H(+). The protein operates within metabolic intermediate biosynthesis; chorismate biosynthesis; chorismate from D-erythrose 4-phosphate and phosphoenolpyruvate: step 4/7. In terms of biological role, involved in the biosynthesis of the chorismate, which leads to the biosynthesis of aromatic amino acids. Catalyzes the reversible NADPH linked reduction of 3-dehydroshikimate (DHSA) to yield shikimate (SA). The protein is Shikimate dehydrogenase (NADP(+)) of Thermoplasma acidophilum (strain ATCC 25905 / DSM 1728 / JCM 9062 / NBRC 15155 / AMRC-C165).